The primary structure comprises 338 residues: Glyceraldehyde-3-phosphate dehydrogenase (338 aa).

NAD(+) is bound by residues 11–12 (TI) and glycine 111. 140 to 142 (SCN) provides a ligand contact to D-glyceraldehyde 3-phosphate. The Nucleophile role is filled by cysteine 141. Arginine 169 provides a ligand contact to NAD(+). 195–196 (HG) is a binding site for D-glyceraldehyde 3-phosphate. NAD(+) is bound at residue glutamine 302.

The protein belongs to the glyceraldehyde-3-phosphate dehydrogenase family. As to quaternary structure, homotetramer.

It is found in the cytoplasm. It catalyses the reaction D-glyceraldehyde 3-phosphate + phosphate + NADP(+) = (2R)-3-phospho-glyceroyl phosphate + NADPH + H(+). The enzyme catalyses D-glyceraldehyde 3-phosphate + phosphate + NAD(+) = (2R)-3-phospho-glyceroyl phosphate + NADH + H(+). It participates in carbohydrate degradation; glycolysis; pyruvate from D-glyceraldehyde 3-phosphate: step 1/5. The sequence is that of Glyceraldehyde-3-phosphate dehydrogenase (gap) from Methanobacterium bryantii.